Here is a 223-residue protein sequence, read N- to C-terminus: Pre-mRNA-splicing factor SPF27 (223 aa).

Positions 139-223 (NENLLHMIDC…GENKENIEDY (85 aa)) form a coiled coil.

The protein belongs to the SPF27 family. In terms of assembly, component of the pre-catalytic and catalytic spliceosome complexes. Component of the postcatalytic spliceosome P complex.

Its subcellular location is the nucleus. Its function is as follows. Required for pre-mRNA splicing as component of the activated spliceosome. May have a scaffolding role in the spliceosome assembly as it contacts all other components of the core complex. In Xenopus tropicalis (Western clawed frog), this protein is Pre-mRNA-splicing factor SPF27 (bcas2).